The chain runs to 36 residues: U-metritoxin-Msn1a (36 aa).

The 33-residue stretch at 4-36 folds into the ShKT domain; sequence CKDKLPACGEYRGSFCKLEKVKSNCEKTCGVKC. Disulfide bonds link Cys-4–Cys-36, Cys-11–Cys-28, and Cys-19–Cys-32.

Belongs to the sea anemone type 1 potassium channel toxin family. Type 1b subfamily.

The protein localises to the secreted. Its subcellular location is the nematocyst. Has hemolytic activity. Inhibits voltage-gated potassium channels (Kv1/KCNA). The sequence is that of U-metritoxin-Msn1a from Metridium senile (Brown sea anemone).